Reading from the N-terminus, the 499-residue chain is Maturase K (499 aa).

Belongs to the intron maturase 2 family. MatK subfamily.

The protein resides in the plastid. Its subcellular location is the chloroplast. In terms of biological role, usually encoded in the trnK tRNA gene intron. Probably assists in splicing its own and other chloroplast group II introns. This is Maturase K from Ceratonia siliqua (Carob).